A 210-amino-acid polypeptide reads, in one-letter code: MDLSVTHMDDLKTVMEDWKNELLVYKFALDALDTKFSIISQEYNLIHGHNPIEHTKSRVKSFESIVNKLMRKGCEITTKEMKEHIHDIAGVRIICSFISDIYNVVNVLKQHEDLRIVKVKDYIQTPKPNGYRSLHLIIEMPVNLTNRVEYVKAEIQIRTIAMDFWASLEHKIYYKLNNDVPKQLTDELKEAAEIAHYLDEKMLGIKKEVD.

It belongs to the RelA/SpoT family. As to quaternary structure, homotetramer.

It carries out the reaction GTP + ATP = guanosine 3'-diphosphate 5'-triphosphate + AMP. The protein operates within purine metabolism; ppGpp biosynthesis; ppGpp from GTP: step 1/2. In terms of biological role, functions as a (p)ppGpp synthase; GDP can be used instead of GTP, resulting in an increase of (p)ppGpp synthesis. Overexpression in relA mutants (triple relA-yjbM-ywaC deletions and single relA deletions) leads to growth arrest; GTP levels fall drastically, various guanine-related nucleotides are synthesized (ppGp or pGpp), the cellular transcriptional profile changes dramatically and 70S ribosome dimerization occurs. Overexpression in the presence of a wild-type relA gene does not have these effects. In eubacteria ppGpp (guanosine 3'-diphosphate 5'-diphosphate) is a mediator of the stringent response that coordinates a variety of cellular activities in response to changes in nutritional abundance. activities in response to changes in nutritional abundance. YwaC has probably a minor role in stringent response. The chain is GTP pyrophosphokinase YwaC (ywaC) from Bacillus subtilis (strain 168).